The chain runs to 242 residues: Ribonuclease PH (242 aa).

Residues R86 and 124 to 126 (GTR) each bind phosphate.

It belongs to the RNase PH family. In terms of assembly, homohexameric ring arranged as a trimer of dimers.

It catalyses the reaction tRNA(n+1) + phosphate = tRNA(n) + a ribonucleoside 5'-diphosphate. Its function is as follows. Phosphorolytic 3'-5' exoribonuclease that plays an important role in tRNA 3'-end maturation. Removes nucleotide residues following the 3'-CCA terminus of tRNAs; can also add nucleotides to the ends of RNA molecules by using nucleoside diphosphates as substrates, but this may not be physiologically important. Probably plays a role in initiation of 16S rRNA degradation (leading to ribosome degradation) during starvation. The protein is Ribonuclease PH of Bacillus pumilus (strain SAFR-032).